Reading from the N-terminus, the 58-residue chain is Small ribosomal subunit protein bS21 (58 aa).

Residues Ala-32–Ser-42 are compositionally biased toward basic and acidic residues. A disordered region spans residues Ala-32 to His-58. The segment covering Val-43–His-58 has biased composition (basic residues).

It belongs to the bacterial ribosomal protein bS21 family.

This chain is Small ribosomal subunit protein bS21, found in Moorella thermoacetica (strain ATCC 39073 / JCM 9320).